The chain runs to 270 residues: Probable septum site-determining protein MinC (270 aa).

A disordered region spans residues 105-129 (DRRAPSSKAADEAPVQQAEPAAPAA). A compositionally biased stretch (low complexity) spans 116-129 (EAPVQQAEPAAPAA).

The protein belongs to the MinC family. As to quaternary structure, interacts with MinD and FtsZ.

Its function is as follows. Cell division inhibitor that blocks the formation of polar Z ring septums. Rapidly oscillates between the poles of the cell to destabilize FtsZ filaments that have formed before they mature into polar Z rings. Prevents FtsZ polymerization. The polypeptide is Probable septum site-determining protein MinC (Burkholderia pseudomallei (strain 668)).